A 62-amino-acid polypeptide reads, in one-letter code: Photosystem II reaction center protein Z (62 aa).

Transmembrane regions (helical) follow at residues 8–28 and 41–61; these read SVFA…VVLA and FSGA…NSFI.

The protein belongs to the PsbZ family. PSII is composed of 1 copy each of membrane proteins PsbA, PsbB, PsbC, PsbD, PsbE, PsbF, PsbH, PsbI, PsbJ, PsbK, PsbL, PsbM, PsbT, PsbY, PsbZ, Psb30/Ycf12, at least 3 peripheral proteins of the oxygen-evolving complex and a large number of cofactors. It forms dimeric complexes.

It localises to the plastid. It is found in the chloroplast thylakoid membrane. Functionally, may control the interaction of photosystem II (PSII) cores with the light-harvesting antenna, regulates electron flow through the 2 photosystem reaction centers. PSII is a light-driven water plastoquinone oxidoreductase, using light energy to abstract electrons from H(2)O, generating a proton gradient subsequently used for ATP formation. The protein is Photosystem II reaction center protein Z of Chaetosphaeridium globosum (Charophycean green alga).